Here is a 39-residue protein sequence, read N- to C-terminus: Photosystem II reaction center protein J (39 aa).

Residues 9–29 (LWIIATFGGIAALTVVGLFIY) form a helical membrane-spanning segment.

It belongs to the PsbJ family. In terms of assembly, PSII is composed of 1 copy each of membrane proteins PsbA, PsbB, PsbC, PsbD, PsbE, PsbF, PsbH, PsbI, PsbJ, PsbK, PsbL, PsbM, PsbT, PsbX, PsbY, PsbZ, Psb30/Ycf12, at least 3 peripheral proteins of the oxygen-evolving complex and a large number of cofactors. It forms dimeric complexes.

The protein resides in the plastid. It is found in the chloroplast thylakoid membrane. Its function is as follows. One of the components of the core complex of photosystem II (PSII). PSII is a light-driven water:plastoquinone oxidoreductase that uses light energy to abstract electrons from H(2)O, generating O(2) and a proton gradient subsequently used for ATP formation. It consists of a core antenna complex that captures photons, and an electron transfer chain that converts photonic excitation into a charge separation. This Guillardia theta (Cryptophyte) protein is Photosystem II reaction center protein J.